Consider the following 134-residue polypeptide: Histone H2A (134 aa).

A compositionally biased stretch (gly residues) spans 1–10 (MTGGKSGGKA). The disordered stretch occupies residues 1-26 (MTGGKSGGKASGSKSSAQSRSSKAGL). N6-acetyllysine is present on residues Lys-5 and Lys-9. Residues 11–25 (SGSKSSAQSRSSKAG) are compositionally biased toward low complexity. Gln-107 bears the N5-methylglutamine mark. A Phosphoserine modification is found at Ser-131. Positions 131 to 132 (SQ) match the [ST]-Q motif motif.

This sequence belongs to the histone H2A family. In terms of assembly, the nucleosome is a histone octamer containing two molecules each of H2A, H2B, H3 and H4 assembled in one H3-H4 heterotetramer and two H2A-H2B heterodimers. The octamer wraps approximately 147 bp of DNA. Phosphorylated to form H2AS128ph (gamma-H2A) in response to DNA double-strand breaks (DSBs) generated by exogenous genotoxic agents and by stalled replication forks. Phosphorylation is dependent on the DNA damage checkpoint kinases MEC1/ATR and TEL1/ATM, spreads on either side of a detected DSB site and may mark the surrounding chromatin for recruitment of proteins required for DNA damage signaling and repair. Gamma-H2A is removed from the DNA prior to the strand invasion-primer extension step of the repair process and subsequently dephosphorylated. Dephosphorylation is necessary for efficient recovery from the DNA damage checkpoint. Post-translationally, acetylated by ESA1 to form H2AK4ac and H2AK7ac.

Its subcellular location is the nucleus. The protein localises to the chromosome. Functionally, core component of nucleosome which plays a central role in DNA double strand break (DSB) repair. Nucleosomes wrap and compact DNA into chromatin, limiting DNA accessibility to the cellular machineries which require DNA as a template. Histones thereby play a central role in transcription regulation, DNA repair, DNA replication and chromosomal stability. DNA accessibility is regulated via a complex set of post-translational modifications of histones, also called histone code, and nucleosome remodeling. The chain is Histone H2A (HTA1) from Phaeosphaeria nodorum (strain SN15 / ATCC MYA-4574 / FGSC 10173) (Glume blotch fungus).